The primary structure comprises 95 residues: Large ribosomal subunit protein uL23 (95 aa).

This sequence belongs to the universal ribosomal protein uL23 family. As to quaternary structure, part of the 50S ribosomal subunit. Contacts protein L29, and trigger factor when it is bound to the ribosome.

One of the early assembly proteins it binds 23S rRNA. One of the proteins that surrounds the polypeptide exit tunnel on the outside of the ribosome. Forms the main docking site for trigger factor binding to the ribosome. In Heliobacterium modesticaldum (strain ATCC 51547 / Ice1), this protein is Large ribosomal subunit protein uL23.